A 1449-amino-acid chain; its full sequence is DNA polymerase III PolC-type (1449 aa).

Residues 194 to 231 (AQEKPVKKESSDNKHKSNGGNKGGYEKKSYKDEPKNEN) form a disordered region. Composition is skewed to basic and acidic residues over residues 197–208 (KPVKKESSDNKH) and 217–229 (GYEK…EPKN). The region spanning 435 to 590 (YVVFDIETTG…DDAKATAEIL (156 aa)) is the Exonuclease domain.

It belongs to the DNA polymerase type-C family. PolC subfamily.

The protein localises to the cytoplasm. The catalysed reaction is DNA(n) + a 2'-deoxyribonucleoside 5'-triphosphate = DNA(n+1) + diphosphate. Its function is as follows. Required for replicative DNA synthesis. This DNA polymerase also exhibits 3' to 5' exonuclease activity. The protein is DNA polymerase III PolC-type of Clostridium perfringens (strain 13 / Type A).